The chain runs to 543 residues: CTP synthase (543 aa).

The segment at 1 to 265 (MARYIFITGG…DDEVLAAFAI (265 aa)) is amidoligase domain. Serine 13 is a binding site for CTP. Serine 13 provides a ligand contact to UTP. ATP is bound at residue 14 to 19 (SLGKGL). Tyrosine 54 lines the L-glutamine pocket. Aspartate 71 serves as a coordination point for ATP. The Mg(2+) site is built by aspartate 71 and glutamate 139. Residues 146 to 148 (DIE), 186 to 191 (KTKPTQ), and lysine 222 contribute to the CTP site. UTP is bound by residues 186–191 (KTKPTQ) and lysine 222. 238–240 (RDA) contacts ATP. The region spanning 291–542 (TIAIVGKYTG…IEAALVRSRL (252 aa)) is the Glutamine amidotransferase type-1 domain. Residue glycine 353 coordinates L-glutamine. The active-site Nucleophile; for glutamine hydrolysis is the cysteine 380. L-glutamine contacts are provided by residues 381-384 (FGMQ), glutamate 404, and arginine 470. Active-site residues include histidine 515 and glutamate 517.

This sequence belongs to the CTP synthase family. Homotetramer.

The enzyme catalyses UTP + L-glutamine + ATP + H2O = CTP + L-glutamate + ADP + phosphate + 2 H(+). It carries out the reaction L-glutamine + H2O = L-glutamate + NH4(+). The catalysed reaction is UTP + NH4(+) + ATP = CTP + ADP + phosphate + 2 H(+). It functions in the pathway pyrimidine metabolism; CTP biosynthesis via de novo pathway; CTP from UDP: step 2/2. Allosterically activated by GTP, when glutamine is the substrate; GTP has no effect on the reaction when ammonia is the substrate. The allosteric effector GTP functions by stabilizing the protein conformation that binds the tetrahedral intermediate(s) formed during glutamine hydrolysis. Inhibited by the product CTP, via allosteric rather than competitive inhibition. Its function is as follows. Catalyzes the ATP-dependent amination of UTP to CTP with either L-glutamine or ammonia as the source of nitrogen. Regulates intracellular CTP levels through interactions with the four ribonucleotide triphosphates. This Rhodopseudomonas palustris (strain BisB5) protein is CTP synthase.